A 594-amino-acid chain; its full sequence is MTLNKLRKKYIDFFKSKKHFEIMGKSLVPENDPTVLFNTAGMQPLIPYLLGEVHPSGDMLVNVQKCLRTGDIDEVGDLSHLTFFEMLGNWSLGAYFKEYSVKCSFEFLTSSDYLNIPKDSLYVSVFEGDQEIPRDTETAKVWESLGISKDRIHYLSKDHNFWGPVGSKGPCGPDTEIYVDTGKSKCSLDCNITCSCGKYFEIWNNVFMQYNKDENGNYIELGRKCVDTGMGLERTIAFLQGKSSVYDTDAFMPIIKRIEYISGKIYGQKEDDDRCIRIISDHVKAACFILADSSVVFPSNLGQGYVLRRLIRRSIRYAKKLGIKSHFLADLVDSVEAIYRSFYNELTEKKDFIKKELSKEEEKFFKTLSQGEQEFIKITRNLPSKTIPGDIAFKLYDTYGFPYEVTEELAIEYGFNVDKLGFNEHFKKHQKTSKKGGDKVFKGGLADYTYETTKLHTATHLLHKALQLVLGDHVRQKGSNITAERLRFDFVHSEKMTDDEIKKVEEIVNLQIKNSLSVKKIIMELSEAREKGAMALFGEKYDDLVSVYEIDGFSLEVCGGPHVENTNELGTFKIQKEQSSSSGIRRIKAILIDE.

Zn(2+)-binding residues include H456, H460, C558, and H562.

The protein belongs to the class-II aminoacyl-tRNA synthetase family. Requires Zn(2+) as cofactor.

Its subcellular location is the cytoplasm. It carries out the reaction tRNA(Ala) + L-alanine + ATP = L-alanyl-tRNA(Ala) + AMP + diphosphate. Functionally, catalyzes the attachment of alanine to tRNA(Ala) in a two-step reaction: alanine is first activated by ATP to form Ala-AMP and then transferred to the acceptor end of tRNA(Ala). Also edits incorrectly charged Ser-tRNA(Ala) and Gly-tRNA(Ala) via its editing domain. The polypeptide is Alanine--tRNA ligase (alaS) (Borreliella burgdorferi (strain ATCC 35210 / DSM 4680 / CIP 102532 / B31) (Borrelia burgdorferi)).